The sequence spans 416 residues: Glutamyl-tRNA reductase (416 aa).

Substrate is bound by residues 49–52 (TCNR), Ser105, 110–112 (EPQ), and Gln116. Cys50 serves as the catalytic Nucleophile. 185–190 (GAGETI) contacts NADP(+).

This sequence belongs to the glutamyl-tRNA reductase family. As to quaternary structure, homodimer.

The enzyme catalyses (S)-4-amino-5-oxopentanoate + tRNA(Glu) + NADP(+) = L-glutamyl-tRNA(Glu) + NADPH + H(+). Its pathway is porphyrin-containing compound metabolism; protoporphyrin-IX biosynthesis; 5-aminolevulinate from L-glutamyl-tRNA(Glu): step 1/2. Its function is as follows. Catalyzes the NADPH-dependent reduction of glutamyl-tRNA(Glu) to glutamate 1-semialdehyde (GSA). The polypeptide is Glutamyl-tRNA reductase (Shewanella loihica (strain ATCC BAA-1088 / PV-4)).